A 310-amino-acid polypeptide reads, in one-letter code: MGFQVLRSVIQAPLAKRSFLCKSCPSGLRVLYNNILLSSRSYSTKGSAFTLIKKLRQETNAPIFLIKEAVEETNGQSFFEAKSVLSEKMKARGQRLAQQLQGRVAKQGWICTAILPDAQAACMLELNCESDFVAQNPKIQRLALSSASSILHSLNRVNADSTEQRNVSTDLDSLKKIILHSDKDSSSNLGNTLFDAFSNATSTTGERIELSRAIVFQRTKPQHQLGRYTHGTDVRVHSSLGRVGCLVSLSNAQKAGLADDIAREFVAQDPESIDDFLHNTSVYDNSKTMKDLLGSANVVDWVRWERGQAQ.

A mitochondrion-targeting transit peptide spans Met-1 to Tyr-42.

Belongs to the EF-Ts family.

Its subcellular location is the mitochondrion. Its function is as follows. Associates with the EF-Tu.GDP complex and induces the exchange of GDP to GTP. It remains bound to the aminoacyl-tRNA.EF-Tu.GTP complex up to the GTP hydrolysis stage on the ribosome. The protein is Elongation factor Ts, mitochondrial (tsf1) of Schizosaccharomyces japonicus (strain yFS275 / FY16936) (Fission yeast).